Reading from the N-terminus, the 330-residue chain is MAYHTPFAAQPPVASSGLPLTLISLDDWALVTLTGADRVKYLQGQVTADIDALSADQHVLCAHCDAKGKMWSNLRLFYRGEGLAFIERRSLLDNQLSELKKYAVFSKVVIEPQPDAVLIGVAGSQAKTALAEIFTELPSTEHPVTQMGNSTLLHFSLPAERFLLVTDTEQAQQLVEKLAGRAQFNDSKQWLALDIEAGFPIIDAANSAQFIPQATNIQALNGISFTKGCYTGQEMVARAKYRGANKRALYWLAGNASRVPAAGEDLEWQLGENWRRTGTVLSAIQLNDGTVWVQAVLNNDLAADSVLRVRDDALGTLAIQPLPYSLAEDK.

Residues Trp28 and Trp190 each contribute to the folate site.

The protein belongs to the tRNA-modifying YgfZ family.

The protein localises to the cytoplasm. Functionally, folate-binding protein involved in regulating the level of ATP-DnaA and in the modification of some tRNAs. It is probably a key factor in regulatory networks that act via tRNA modification, such as initiation of chromosomal replication. This Yersinia pseudotuberculosis serotype IB (strain PB1/+) protein is tRNA-modifying protein YgfZ.